A 400-amino-acid polypeptide reads, in one-letter code: Zinc finger protein 514 (400 aa).

A KRAB domain is found at 1–72 (MTFEDVAVEF…EREISTGAHS (72 aa)). 7 consecutive C2H2-type zinc fingers follow at residues 204–226 (CKCN…QRCH), 232–254 (YECS…QRTH), 260–282 (YECS…YRFH), 288–310 (YKCN…QRTH), 316–338 (YECR…YRFH), 344–366 (YKCN…YRFH), and 372–394 (YKCN…QRSH).

It belongs to the krueppel C2H2-type zinc-finger protein family.

The protein resides in the nucleus. Its function is as follows. May be involved in transcriptional regulation. This chain is Zinc finger protein 514 (ZNF514), found in Homo sapiens (Human).